The primary structure comprises 122 residues: Large ribosomal subunit protein uL14c (122 aa).

Belongs to the universal ribosomal protein uL14 family. Part of the 50S ribosomal subunit.

It is found in the plastid. It localises to the chloroplast. Its function is as follows. Binds to 23S rRNA. This is Large ribosomal subunit protein uL14c from Nicotiana sylvestris (Wood tobacco).